The primary structure comprises 432 residues: Cyclic GMP-AMP synthase (432 aa).

Residue 110–115 (QGSFQY) participates in GTP binding. Aspartate 129 and aspartate 131 together coordinate Mg(2+). Residue arginine 180 coordinates ATP. Aspartate 191 provides a ligand contact to Mg(2+). Position 255 (serine 255) interacts with ATP. 3 residues coordinate GTP: lysine 283, serine 297, and aspartate 344. A Glycyl cysteine dithioester (Gly-Cys) (interchain with C-13 in Cap2) cross-link involves residue glycine 432. Residue glycine 432 forms a Glycyl cysteine dithioester (Gly-Cys) (interchain with C-493 in Cap2) linkage. Glycine 432 is covalently cross-linked (Glycyl cysteine dithioester (Gly-Cys) (interchain with C-513 in Cap2)). Glycine 432 participates in a covalent cross-link: Glycyl lysine isopeptide (Gly-Lys) (interchain with K-? in acceptor proteins).

This sequence belongs to the CD-NTase family. A02 subfamily. As to quaternary structure, a Cap2 dimer is bound on either side by a DncV monomer. It depends on Mg(2+) as a cofactor. In terms of processing, in bacteria expressing capV-dncV-cap2-cap3, this protein is conjugated to about 130 cellular proteins by Cap2, most of which are involved in metabolism; more conjugated protein is found in the absence of Cap3. Most conjugation occurs via an isopeptide bond with the epsilon-amine of Lys on the target protein, but Cys-conjugation also occurs, including to Cap2. Conjugation or deconjugation from cellular proteins does not change the DncV activity in vitro, but does so in vivo during infection. (Microbial infection) During phage T4 infection is conjugated to at least 2 T4 proteins (fibritin (wac) and dexA.2).

The enzyme catalyses GTP + ATP = 3',3'-cGAMP + 2 diphosphate. Its activity is regulated as follows. Primed for activation by Cap2 which conjugates it to cellular proteins. cGAMP production is induced in phage T4 infected cells in a manner that requires Cap2 and Cap3, as well as a C-terminal Ala or Gly residue in this protein. In terms of biological role, cyclic nucleotide synthase (second messenger synthase) of a CBASS antivirus system. CBASS (cyclic oligonucleotide-based antiphage signaling system) provides immunity against bacteriophages. The CD-NTase protein (DncV, this protein) synthesizes cyclic nucleotides in response to infection; these serve as specific second messenger signals. The signals activate a diverse range of effectors, leading to bacterial cell death and thus abortive phage infection. A type II-A(GA) CBASS system. Catalyzes the synthesis of 3',3'-cyclic GMP-AMP (cGAMP) from GTP and ATP, a second messenger in cell signal transduction. Its product controls the activity of cGAMP-activated phospholipase CapV, a patatin-like lipase that is a direct cGAMP receptor encoded in the dncV operon. Functionally, protects E.coli against phage infection. When capV and dncV are introduced in E.coli MG1655 there is 1000-fold protection against phage P1; protection against other phage (T2, T4, T5, T6 and lambda-vir) requires the 2 subsequent genes (cap2 and cap3). In another paper the capV-dncV-cap2-cap3 operon gives 10(4)-10(5)-fold protection against phages lambda, T2, T4 and T6, about 1000-fold protection against P1 and 10-fold protection against T5. In Escherichia coli (strain TW11681), this protein is Cyclic GMP-AMP synthase.